We begin with the raw amino-acid sequence, 492 residues long: ATP synthase subunit beta, chloroplastic (492 aa).

170–177 provides a ligand contact to ATP; sequence GGAGVGKT.

The protein belongs to the ATPase alpha/beta chains family. In terms of assembly, F-type ATPases have 2 components, CF(1) - the catalytic core - and CF(0) - the membrane proton channel. CF(1) has five subunits: alpha(3), beta(3), gamma(1), delta(1), epsilon(1). CF(0) has four main subunits: a(1), b(1), b'(1) and c(9-12).

Its subcellular location is the plastid. The protein resides in the chloroplast thylakoid membrane. It carries out the reaction ATP + H2O + 4 H(+)(in) = ADP + phosphate + 5 H(+)(out). Its function is as follows. Produces ATP from ADP in the presence of a proton gradient across the membrane. The catalytic sites are hosted primarily by the beta subunits. This chain is ATP synthase subunit beta, chloroplastic, found in Pinus thunbergii (Japanese black pine).